The chain runs to 280 residues: Secreted RxLR effector protein 39 (280 aa).

An N-terminal signal peptide occupies residues 1 to 19 (MRGAYYVAIALLIVASCSA). Positions 49-70 (RVLRGSRDLKNKWAVHAGGEDR) match the RxLR-dEER motif. The disordered stretch occupies residues 229 to 249 (EVKARSSKRQRTNPMLNNMDG).

Belongs to the RxLR effector family.

It is found in the secreted. The protein localises to the host nucleus. In terms of biological role, secreted effector that completely suppresses the host cell death induced by cell death-inducing proteins. This Plasmopara viticola (Downy mildew of grapevine) protein is Secreted RxLR effector protein 39.